A 366-amino-acid polypeptide reads, in one-letter code: MWPLSHRHLCLAFLLVCVLSAISFFLHIHQDSFRHGLSLSVLCPDRHLVTPPVAIFCLPGSPMSPNASSPRPQHPASLSGTWTIYPDGRFGNQMGQYATLLALAQLNGRRAFILPSMHAALAPVFRITLPVLAPEVDSRTPWRELRLHDWMSEEYADLGDPFLKLSGFPCSWTFFHHLREQIRSEFTLHDHLRQEAQSVLGRLRLGRSGDRPRTFVGVHVRRGDYLQVMPQRWKGVVGNSAYLRQAMDWFRARHEAPVFVVTSNGMEWCRENIDASKGDVMFAGDGQEASPWKDFALLTQCNHTIMTIGTFGFWAAYLAGGDTVYLANFTLPDSEFLKIFKPEAAFLPEWVGINADLSPLWTLAEP.

Residues 1-8 (MWPLSHRH) lie on the Cytoplasmic side of the membrane. A helical; Signal-anchor for type II membrane protein membrane pass occupies residues 9 to 25 (LCLAFLLVCVLSAISFF). The Lumenal segment spans residues 26 to 366 (LHIHQDSFRH…LSPLWTLAEP (341 aa)). N-linked (GlcNAc...) asparagine glycosylation is found at Asn-66, Asn-302, and Asn-328.

This sequence belongs to the glycosyltransferase 11 family.

The protein resides in the golgi apparatus. It localises to the golgi stack membrane. It carries out the reaction a beta-D-galactosyl-(1-&gt;4)-N-acetyl-beta-D-glucosaminyl derivative + GDP-beta-L-fucose = an alpha-L-Fuc-(1-&gt;2)-beta-D-Gal-(1-&gt;4)-beta-D-GlcNAc derivative + GDP + H(+). The catalysed reaction is a ganglioside GA1 + GDP-beta-L-fucose = a ganglioside Fuc-GA1 + GDP + H(+). It catalyses the reaction a beta-D-Gal-(1-&gt;3)-beta-D-GlcNAc-(1-&gt;3)-beta-D-Gal-(1-&gt;4)-beta-D-Glc-(1&lt;-&gt;1')-Cer(d18:1(4E)) + GDP-beta-L-fucose = alpha-L-fucosyl-(1-&gt;2)- beta-D-galactosyl-(1-&gt;3)-N-acetyl-beta-D-glucosaminyl-(1-&gt;3)-beta-D-galactosyl-(1-&gt;4)-beta-D-glucosyl-(1&lt;-&gt;1')-N-acylsphing-4-enine + GDP + H(+). The enzyme catalyses a neolactoside nLc4Cer(d18:1(4E)) + GDP-beta-L-fucose = a neolactoside IV(2)-alpha-Fuc-nLc4Cer(d18:1(4E)) + GDP + H(+). It carries out the reaction a ganglioside GM1 + GDP-beta-L-fucose = a ganglioside Fuc-GM1 + GDP + H(+). The catalysed reaction is beta-D-galactosyl-(1-&gt;3)-N-acetyl-D-galactosamine + GDP-beta-L-fucose = alpha-L-fucosyl-(1-&gt;2)-beta-D-galactosyl-(1-&gt;3)-N-acetyl-D-galactosamine + GDP + H(+). Its pathway is protein modification; protein glycosylation. In terms of biological role, catalyzes the transfer of L-fucose, from a guanosine diphosphate-beta-L-fucose, to the terminal galactose residue of glycoconjugates through an alpha(1,2) linkage leading to H antigen synthesis that is an intermediate substrate in the synthesis of ABO blood group antigens. H antigen is essential for maturation of the glomerular layer of the main olfactory bulb, in cell migration and early cell-cell contacts during tumor associated angiogenesis. Preferentially fucosylates soluble lactose and to a lesser extent fucosylates glycolipids gangliosides GA1 and GM1a. This chain is Galactoside alpha-(1,2)-fucosyltransferase 1, found in Plecturocebus brunneus (Brown titi monkey).